The chain runs to 100 residues: Urease subunit gamma (100 aa).

This sequence belongs to the urease gamma subunit family. Heterotrimer of UreA (gamma), UreB (beta) and UreC (alpha) subunits. Three heterotrimers associate to form the active enzyme.

Its subcellular location is the cytoplasm. The catalysed reaction is urea + 2 H2O + H(+) = hydrogencarbonate + 2 NH4(+). The protein operates within nitrogen metabolism; urea degradation; CO(2) and NH(3) from urea (urease route): step 1/1. In Haemophilus influenzae (strain 86-028NP), this protein is Urease subunit gamma.